A 152-amino-acid chain; its full sequence is Protein Smg homolog (152 aa).

Belongs to the Smg family.

The polypeptide is Protein Smg homolog (Nitrosomonas eutropha (strain DSM 101675 / C91 / Nm57)).